We begin with the raw amino-acid sequence, 535 residues long: Succinate-semialdehyde dehydrogenase, mitochondrial (535 aa).

The transit peptide at 1–47 (MATCFWLRSCGARRLGSTFPGCRLRPRAGGLVPASGPAPGPAQLRCY) directs the protein to the mitochondrion. Lys126 carries the post-translational modification N6-acetyllysine; alternate. Position 126 is an N6-succinyllysine; alternate (Lys126). Residues Lys135 and Lys184 each carry the N6-succinyllysine modification. NAD(+)-binding positions include Arg213 and 228-231 (KPAE). Substrate is bound at residue Arg213. Position 265 is an N6-acetyllysine; alternate (Lys265). Lys265 bears the N6-succinyllysine; alternate mark. An NAD(+)-binding site is contributed by 284 to 289 (GSTTTG). The active-site Proton acceptor is the Glu306. Arg334 contributes to the substrate binding site. Cys340 functions as the Nucleophile in the catalytic mechanism. A disulfide bond links Cys340 and Cys342. Lys365 is modified (N6-acetyllysine). N6-succinyllysine is present on Lys402. Residue Lys411 is modified to N6-acetyllysine. Position 498 (Ser498) interacts with substrate. Residue Ser499 is modified to Phosphoserine.

The protein belongs to the aldehyde dehydrogenase family. As to quaternary structure, homotetramer.

It is found in the mitochondrion. The enzyme catalyses succinate semialdehyde + NAD(+) + H2O = succinate + NADH + 2 H(+). It functions in the pathway amino-acid degradation; 4-aminobutanoate degradation. With respect to regulation, redox-regulated. Inhibited under oxydizing conditions. Catalyzes one step in the degradation of the inhibitory neurotransmitter gamma-aminobutyric acid (GABA). The chain is Succinate-semialdehyde dehydrogenase, mitochondrial (ALDH5A1) from Hylobates lar (Lar gibbon).